Consider the following 1622-residue polypeptide: Transient receptor potential cation channel subfamily M member 1 (1622 aa).

5 disordered regions span residues Met-1–Lys-25, Pro-64–Gln-95, Leu-450–Glu-490, Leu-618–Ile-641, and Ser-822–Gln-856. The Cytoplasmic portion of the chain corresponds to Met-1–Lys-875. Residues Ser-8–Lys-25 are compositionally biased toward low complexity. The span at Ala-70–Gln-95 shows a compositional bias: polar residues. Over residues Gly-472 to Lys-483 the composition is skewed to basic residues. Basic and acidic residues-rich tracts occupy residues Lys-823–Glu-832 and Gly-843–His-853. Residues Phe-876–Val-896 form a helical membrane-spanning segment. Residues Arg-897 to Glu-942 lie on the Extracellular side of the membrane. The chain crosses the membrane as a helical span at residues Tyr-943 to Leu-963. At Gln-964–Arg-973 the chain is on the cytoplasmic side. Residues Val-974–Asn-994 traverse the membrane as a helical segment. The Extracellular portion of the chain corresponds to Lys-995 to Lys-1006. The chain crosses the membrane as a helical span at residues Met-1007–Val-1027. Topologically, residues Ala-1028–Ala-1099 are cytoplasmic. The chain crosses the membrane as a helical span at residues Leu-1100–Phe-1120. A glycan (N-linked (GlcNAc...) asparagine) is linked at Asn-1121. Residues Asn-1121–Pro-1150 are Extracellular-facing. Residues Val-1151 to Gly-1171 form a helical membrane-spanning segment. Topologically, residues Arg-1172–Cys-1622 are cytoplasmic. Positions Asp-1224–Lys-1252 form a coiled coil. Disordered stretches follow at residues Glu-1354 to Leu-1383, Leu-1389 to Pro-1408, and Cys-1567 to Cys-1622. Over residues Gln-1613–Cys-1622 the composition is skewed to basic and acidic residues.

This sequence belongs to the transient receptor (TC 1.A.4) family. LTrpC subfamily. TRPM1 sub-subfamily. As to quaternary structure, homodimer. Interacts with TRPM3; the interaction results in the formation of a heteromultimeric cation channel complex that are functionally different from the homomeric channels. Interacts with GPR179. Associates with both guanine nucleotide-binding proteins G(o) and beta-gamma G protein dimer; implicated in directly regulating TRPM1 channel open-state. In terms of tissue distribution, expressed in the retina where it localizes on dendritic tips of ON bipolar cells. Specifically, it is expressed in retinal bipolar cells (BPCs) of the ON subtype. Not detected in brain, lung, liver, heart, kidney, spleen or small intestine. Also expressed at high levels in poorly metastatic variants of B16 melanoma and at much reduced levels in highly metastatic variants of B16 melanoma.

The protein localises to the cell membrane. It localises to the endoplasmic reticulum membrane. Its subcellular location is the cell projection. The protein resides in the axon. The catalysed reaction is Ca(2+)(in) = Ca(2+)(out). The enzyme catalyses Mg(2+)(in) = Mg(2+)(out). It carries out the reaction Mn(2+)(in) = Mn(2+)(out). It catalyses the reaction Ni(2+)(in) = Ni(2+)(out). With respect to regulation, inhibited by extracellular zinc ions. Inhibited by intracellular Mg(2+). Activated by the neuroactive steroid pregnenolone sulfate. Negatively regulated by activation of GRM6 receptors in the ON-bipolar cells. Functionally, constitutively open nonselective divalent cation-conducting channels which mediate the influx of Ca(2+), Mg(2+), Mn(2+), Ba(2+), and Ni(2+) into the cytoplasm, leading to membrane depolarization. Impermeable to zinc ions. In addition, forms heteromultimeric ion channels with TRPM3 which are permeable for calcium and zinc ions. Plays an essential role for the depolarizing photoresponse of retinal ON bipolar cells. In the dark, tonic release of glutamate activates the G-protein coupled receptor for glutamate (GRM6), its activation induces the release of G(o) and the beta-gamma G protein dimer. Both subunits can interact and inactivate the TRPM1 channel. A light onset, induces decrease in glutamate release and deactivation of GRM6 leading to channel opening and membrane depolarization. May play a role in metastasis suppression. This chain is Transient receptor potential cation channel subfamily M member 1, found in Mus musculus (Mouse).